A 331-amino-acid polypeptide reads, in one-letter code: UPF0329 protein ECU01_0080/ECU01_1530/ECU02_1560/ECU04_0090/ECU08_0010/ECU08_2090 (331 aa).

A compositionally biased stretch (basic and acidic residues) spans 305-320 (QRSEMEKRDREQDPER). The interval 305–331 (QRSEMEKRDREQDPERRRLRARRVGSL) is disordered. A compositionally biased stretch (basic residues) spans 321-331 (RRLRARRVGSL).

The protein belongs to the UPF0329 family.

The protein is UPF0329 protein ECU01_0080/ECU01_1530/ECU02_1560/ECU04_0090/ECU08_0010/ECU08_2090 of Encephalitozoon cuniculi (strain GB-M1) (Microsporidian parasite).